Consider the following 751-residue polypeptide: Trehalose phosphorylase (751 aa).

A propeptide spanning residues 1–26 (MSTPHHQFESKSSTAIRRRLSSSVSS) is cleaved from the precursor. Residues 1–28 (MSTPHHQFESKSSTAIRRRLSSSVSSKQ) form a disordered region.

Belongs to the glycosyltransferase group 1 family. Glycosyltransferase 4 subfamily. Homodimer. Expressed in mycelia, stipes and pilei.

The catalysed reaction is alpha,alpha-trehalose + phosphate = alpha-D-glucose + alpha-D-glucose 1-phosphate. Its function is as follows. Reversibly catalyzes the synthesis and degradation of trehalose from glucose and alpha-D-glucose 1-phosphate. The equilibrium lies in the direction of trehalose synthesis. This is Trehalose phosphorylase from Pleurotus sajor-caju (Oyster mushroom).